The sequence spans 323 residues: THO complex subunit 6 homolog (323 aa).

6 WD repeats span residues L6–A45, A58–A96, L108–V147, G150–C189, R200–V238, and C279–L321.

Belongs to the WD repeat THOC6 family. As to quaternary structure, component of the THO subcomplex, which is composed of thoc1, thoc2, thoc3, thoc5, thoc6 and thoc7. Component of the transcription/export (TREX) complex at least composed of alyref/thoc4, ddx39b, sarnp/cip29, chtop and the THO subcomplex.

The protein resides in the nucleus. It is found in the nucleus speckle. Component of the THO subcomplex of the TREX complex which is thought to couple mRNA transcription, processing and nuclear export, and which specifically associates with spliced mRNA and not with unspliced pre-mRNA. Plays a key structural role in the oligomerization of the THO-DDX39B complex. TREX is recruited to spliced mRNAs by a transcription-independent mechanism, binds to mRNA upstream of the exon-junction complex (EJC) and is recruited in a splicing- and cap-dependent manner to a region near the 5' end of the mRNA where it functions in mRNA export to the cytoplasm via the TAP/NXF1 pathway. Plays a role in apoptosis negative control involved in brain development. The protein is THO complex subunit 6 homolog (thoc6) of Danio rerio (Zebrafish).